The chain runs to 558 residues: Formate--tetrahydrofolate ligase (558 aa).

65–72 (TPAGEGKT) is a binding site for ATP.

Belongs to the formate--tetrahydrofolate ligase family.

The enzyme catalyses (6S)-5,6,7,8-tetrahydrofolate + formate + ATP = (6R)-10-formyltetrahydrofolate + ADP + phosphate. It functions in the pathway one-carbon metabolism; tetrahydrofolate interconversion. The polypeptide is Formate--tetrahydrofolate ligase (Methylobacterium nodulans (strain LMG 21967 / CNCM I-2342 / ORS 2060)).